A 396-amino-acid chain; its full sequence is Elongation factor Tu (396 aa).

Residues 10–206 (KPHCNIGTIG…AVDAYIPQPE (197 aa)) form the tr-type G domain. The G1 stretch occupies residues 19-26 (GHVDHGKT). 19–26 (GHVDHGKT) contacts GTP. Mg(2+) is bound at residue Thr26. The segment at 60 to 64 (GITIS) is G2. A G3 region spans residues 81 to 84 (DCPG). GTP is bound by residues 81–85 (DCPGH) and 136–139 (NKVD). Residues 136–139 (NKVD) form a G4 region. The tract at residues 174 to 176 (SAL) is G5.

Belongs to the TRAFAC class translation factor GTPase superfamily. Classic translation factor GTPase family. EF-Tu/EF-1A subfamily. Monomer.

Its subcellular location is the cytoplasm. It carries out the reaction GTP + H2O = GDP + phosphate + H(+). Functionally, GTP hydrolase that promotes the GTP-dependent binding of aminoacyl-tRNA to the A-site of ribosomes during protein biosynthesis. The sequence is that of Elongation factor Tu from Parvibaculum lavamentivorans (strain DS-1 / DSM 13023 / NCIMB 13966).